Consider the following 562-residue polypeptide: Urocanate hydratase (562 aa).

Residues 53–54 (GG), Q131, 177–179 (GMG), E197, R202, 243–244 (NA), 268–272 (QTSAH), 278–279 (YL), and Y327 each bind NAD(+). C415 is an active-site residue. G497 contacts NAD(+).

Belongs to the urocanase family. Requires NAD(+) as cofactor.

The protein localises to the cytoplasm. The enzyme catalyses 4-imidazolone-5-propanoate = trans-urocanate + H2O. The protein operates within amino-acid degradation; L-histidine degradation into L-glutamate; N-formimidoyl-L-glutamate from L-histidine: step 2/3. Its function is as follows. Catalyzes the conversion of urocanate to 4-imidazolone-5-propionate. The chain is Urocanate hydratase from Chelativorans sp. (strain BNC1).